Here is a 606-residue protein sequence, read N- to C-terminus: 4-hydroxy-3-methylbut-2-en-1-yl diphosphate synthase (flavodoxin) (606 aa).

[4Fe-4S] cluster is bound by residues C513, C516, C547, and E554.

It belongs to the IspG family. Requires [4Fe-4S] cluster as cofactor.

The enzyme catalyses (2E)-4-hydroxy-3-methylbut-2-enyl diphosphate + oxidized [flavodoxin] + H2O + 2 H(+) = 2-C-methyl-D-erythritol 2,4-cyclic diphosphate + reduced [flavodoxin]. It functions in the pathway isoprenoid biosynthesis; isopentenyl diphosphate biosynthesis via DXP pathway; isopentenyl diphosphate from 1-deoxy-D-xylulose 5-phosphate: step 5/6. In terms of biological role, converts 2C-methyl-D-erythritol 2,4-cyclodiphosphate (ME-2,4cPP) into 1-hydroxy-2-methyl-2-(E)-butenyl 4-diphosphate. The chain is 4-hydroxy-3-methylbut-2-en-1-yl diphosphate synthase (flavodoxin) from Chlamydia felis (strain Fe/C-56) (Chlamydophila felis).